The following is a 151-amino-acid chain: Large ribosomal subunit protein uL13 (151 aa).

It belongs to the universal ribosomal protein uL13 family. As to quaternary structure, part of the 50S ribosomal subunit.

Its function is as follows. This protein is one of the early assembly proteins of the 50S ribosomal subunit, although it is not seen to bind rRNA by itself. It is important during the early stages of 50S assembly. In Rippkaea orientalis (strain PCC 8801 / RF-1) (Cyanothece sp. (strain PCC 8801)), this protein is Large ribosomal subunit protein uL13.